We begin with the raw amino-acid sequence, 222 residues long: Twisted gastrulation protein homolog 1 (222 aa).

The first 24 residues, 1-24, serve as a signal peptide directing secretion; the sequence is MKSHYIVLALASLTFLLCLPVSQS. N-linked (GlcNAc...) asparagine glycosylation is found at N80 and N146.

The protein belongs to the twisted gastrulation protein family. In terms of assembly, interacts with CHRD and/or BMP4. This interaction enhances CHRD/BMP4 complex formation. Interacts with BMP7. In terms of tissue distribution, expressed in lymph node, liver, kidney, and lung. Expression in the kidney was stronger in the medulla than in the cortex, particularly in the cells surrounding the medullary tubules. Expressed in growth plate cartilage of long bones, ribs, and digits and to a lesser extent also in the resting zone of the epiphysis, trabecular bone, and vertebral cartilage. Expression seems to be absent from other skeletal tissues including muscle, skin, and fibroblasts.

It localises to the secreted. In terms of biological role, may be involved in dorsoventral axis formation. Seems to antagonize BMP signaling by forming ternary complexes with CHRD and BMPs, thereby preventing BMPs from binding to their receptors. In addition to the anti-BMP function, also has pro-BMP activity, partly mediated by cleavage and degradation of CHRD, which releases BMPs from ternary complexes. May be an important modulator of BMP-regulated cartilage development and chondrocyte differentiation. May play a role in thymocyte development. The polypeptide is Twisted gastrulation protein homolog 1 (Twsg1) (Mus musculus (Mouse)).